The primary structure comprises 203 residues: A-type ATP synthase subunit E (203 aa).

It belongs to the V-ATPase E subunit family. In terms of assembly, has multiple subunits with at least A(3), B(3), C, D, E, F, H, I and proteolipid K(x).

It is found in the cell membrane. Functionally, component of the A-type ATP synthase that produces ATP from ADP in the presence of a proton gradient across the membrane. The sequence is that of A-type ATP synthase subunit E from Desulfurococcus sp. (strain SY).